A 433-amino-acid polypeptide reads, in one-letter code: Inositol hexakisphosphate kinase 1 (433 aa).

The tract at residues glutamate 100–serine 160 is disordered. Residues proline 113–histidine 123 are compositionally biased toward basic residues. Residues serine 139 to threonine 149 show a composition bias toward polar residues. The span at lysine 150–serine 160 shows a compositional bias: basic and acidic residues. Serine 151 carries the post-translational modification Phosphoserine. Residue proline 220 to glycine 228 coordinates substrate. Positions proline 362–proline 383 are disordered. Residues proline 366 to leucine 375 are compositionally biased toward polar residues.

This sequence belongs to the inositol phosphokinase (IPK) family.

The protein resides in the cytoplasm. It is found in the nucleus. The catalysed reaction is 1D-myo-inositol hexakisphosphate + ATP = 5-diphospho-1D-myo-inositol 1,2,3,4,6-pentakisphosphate + ADP. It catalyses the reaction 1-diphospho-1D-myo-inositol 2,3,4,5,6-pentakisphosphate + ATP + H(+) = 1,5-bis(diphospho)-1D-myo-inositol 2,3,4,6-tetrakisphosphate + ADP. Functionally, converts inositol hexakisphosphate (InsP6) to diphosphoinositol pentakisphosphate (InsP7/PP-InsP5). Converts 1,3,4,5,6-pentakisphosphate (InsP5) to PP-InsP4. The sequence is that of Inositol hexakisphosphate kinase 1 (Ip6k1) from Rattus norvegicus (Rat).